The chain runs to 391 residues: Chaperone protein DnaJ (391 aa).

The 66-residue stretch at 2 to 67 folds into the J domain; sequence DYYDVLGVSK…QKRESYDRYG (66 aa). The CR-type zinc-finger motif lies at 148–226; the sequence is GVEKELLVSG…CRGQGRVKDK (79 aa). The Zn(2+) site is built by Cys-161, Cys-164, Cys-178, Cys-181, Cys-200, Cys-203, Cys-214, and Cys-217. 4 CXXCXGXG motif repeats span residues 161 to 168, 178 to 185, 200 to 207, and 214 to 221; these read CTTCSGSG, CERCKGSG, CPECGGEG, and CSNCRGQG.

This sequence belongs to the DnaJ family. As to quaternary structure, homodimer. Zn(2+) is required as a cofactor.

The protein resides in the cytoplasm. Participates actively in the response to hyperosmotic and heat shock by preventing the aggregation of stress-denatured proteins and by disaggregating proteins, also in an autonomous, DnaK-independent fashion. Unfolded proteins bind initially to DnaJ; upon interaction with the DnaJ-bound protein, DnaK hydrolyzes its bound ATP, resulting in the formation of a stable complex. GrpE releases ADP from DnaK; ATP binding to DnaK triggers the release of the substrate protein, thus completing the reaction cycle. Several rounds of ATP-dependent interactions between DnaJ, DnaK and GrpE are required for fully efficient folding. Also involved, together with DnaK and GrpE, in the DNA replication of plasmids through activation of initiation proteins. The protein is Chaperone protein DnaJ of Chlamydia felis (strain Fe/C-56) (Chlamydophila felis).